A 367-amino-acid chain; its full sequence is Di-N-acetylchitobiase (367 aa).

The signal sequence occupies residues 1-23 (MALSDLLELTLLLLLPLLERLSA). The region spanning 24-367 (EDCPCSEASL…EMWGALRPRL (344 aa)) is the GH18 domain. Residue glutamate 128 is the Proton donor of the active site. Residues asparagine 178, asparagine 213, asparagine 247, and asparagine 284 are each glycosylated (N-linked (GlcNAc...) asparagine).

The protein belongs to the glycosyl hydrolase 18 family.

It is found in the lysosome. Functionally, involved in the degradation of asparagine-linked glycoproteins. Hydrolyze of N-acetyl-beta-D-glucosamine (1-4)N-acetylglucosamine chitobiose core from the reducing end of the bond, it requires prior cleavage by glycosylasparaginase. The chain is Di-N-acetylchitobiase (Ctbs) from Rattus norvegicus (Rat).